A 926-amino-acid polypeptide reads, in one-letter code: Alpha-aminoadipic semialdehyde synthase, mitochondrial (926 aa).

Residues 1–27 (MLQVHRTGLGRLGVSLSKGLHHKAVLA) constitute a mitochondrion transit peptide. The tract at residues 28-476 (VRREDVNAWE…ESRERAQSLS (449 aa)) is lysine-ketoglutarate reductase. An N6-acetyllysine mark is found at Lys-48 and Lys-56. Lys-93 carries the post-translational modification N6-acetyllysine; alternate. The residue at position 93 (Lys-93) is an N6-succinyllysine; alternate. N6-acetyllysine is present on Lys-128. At Lys-138 the chain carries N6-acetyllysine; alternate. An N6-succinyllysine; alternate modification is found at Lys-138. An N6-succinyllysine modification is found at Lys-274. The residue at position 286 (Lys-286) is an N6-acetyllysine; alternate. Lys-286 is modified (N6-succinyllysine; alternate). Lys-333 is subject to N6-succinyllysine. N6-acetyllysine; alternate is present on Lys-458. Lys-458 carries the post-translational modification N6-succinyllysine; alternate. Residues 477–926 (MGTRRKVLVL…IYTTQSTIKP (450 aa)) form a saccharopine dehydrogenase region. The NAD(+) site is built by Ser-488, Asp-512, and Gln-516. Lys-523 bears the N6-acetyllysine; alternate mark. Residue Lys-523 is modified to N6-succinyllysine; alternate. Ile-533 serves as a coordination point for NAD(+). Lys-535 carries the post-translational modification N6-acetyllysine; alternate. Lys-535 carries the N6-succinyllysine; alternate modification. Residues Leu-554, Ala-576, and Ser-577 each contribute to the NAD(+) site. Residue 577-578 (SY) participates in L-saccharopine binding. Lys-584 carries the post-translational modification N6-acetyllysine; alternate. An N6-succinyllysine; alternate modification is found at Lys-584. Residues Leu-603, Asp-604, and Pro-605 each contribute to the NAD(+) site. L-saccharopine is bound at residue Asp-604. Arg-703 is an L-saccharopine binding site. Lys-707 is modified (N6-acetyllysine). Position 724 to 726 (724 to 726 (TLR)) interacts with L-saccharopine. The residue at position 732 (Lys-732) is an N6-succinyllysine. Position 739 is an N6-acetyllysine (Lys-739). Residue Lys-761 is modified to N6-acetyllysine; alternate. Lys-761 bears the N6-succinyllysine; alternate mark. An N6-acetyllysine modification is found at Lys-780.

The protein in the N-terminal section; belongs to the AlaDH/PNT family. In the C-terminal section; belongs to the saccharopine dehydrogenase family. As to quaternary structure, homotetramer. Expressed in all 16 tissues examined with highest expression in the liver.

It localises to the mitochondrion. It catalyses the reaction L-saccharopine + NADP(+) + H2O = L-lysine + 2-oxoglutarate + NADPH + H(+). It carries out the reaction L-saccharopine + NAD(+) + H2O = (S)-2-amino-6-oxohexanoate + L-glutamate + NADH + H(+). Its pathway is amino-acid degradation; L-lysine degradation via saccharopine pathway; glutaryl-CoA from L-lysine: step 1/6. It functions in the pathway amino-acid degradation; L-lysine degradation via saccharopine pathway; glutaryl-CoA from L-lysine: step 2/6. In terms of biological role, bifunctional enzyme that catalyzes the first two steps in lysine degradation. The polypeptide is Alpha-aminoadipic semialdehyde synthase, mitochondrial (Homo sapiens (Human)).